The primary structure comprises 245 residues: 4-hydroxy-tetrahydrodipicolinate reductase (245 aa).

Residues 7–12, 75–77, and 102–105 each bind NAD(+); these read GAKGKV, GTT, and APNF. His132 (proton donor/acceptor) is an active-site residue. (S)-2,3,4,5-tetrahydrodipicolinate is bound at residue His133. The active-site Proton donor is Lys136. Residue 142 to 143 coordinates (S)-2,3,4,5-tetrahydrodipicolinate; sequence GT.

It belongs to the DapB family.

The protein localises to the cytoplasm. It catalyses the reaction (S)-2,3,4,5-tetrahydrodipicolinate + NAD(+) + H2O = (2S,4S)-4-hydroxy-2,3,4,5-tetrahydrodipicolinate + NADH + H(+). The catalysed reaction is (S)-2,3,4,5-tetrahydrodipicolinate + NADP(+) + H2O = (2S,4S)-4-hydroxy-2,3,4,5-tetrahydrodipicolinate + NADPH + H(+). It participates in amino-acid biosynthesis; L-lysine biosynthesis via DAP pathway; (S)-tetrahydrodipicolinate from L-aspartate: step 4/4. Functionally, catalyzes the conversion of 4-hydroxy-tetrahydrodipicolinate (HTPA) to tetrahydrodipicolinate. This is 4-hydroxy-tetrahydrodipicolinate reductase from Mycobacterium bovis (strain BCG / Pasteur 1173P2).